Reading from the N-terminus, the 560-residue chain is Phenylalanine--tRNA ligase beta subunit (560 aa).

The 76-residue stretch at 279-354 folds into the B5 domain; it reads LTPKEFEVDL…IAYGYNNIEP (76 aa). Residues aspartate 332, aspartate 338, glutamate 341, and aspartate 342 each coordinate Mg(2+).

This sequence belongs to the phenylalanyl-tRNA synthetase beta subunit family. Type 2 subfamily. Tetramer of two alpha and two beta subunits. It depends on Mg(2+) as a cofactor.

It is found in the cytoplasm. It carries out the reaction tRNA(Phe) + L-phenylalanine + ATP = L-phenylalanyl-tRNA(Phe) + AMP + diphosphate + H(+). The polypeptide is Phenylalanine--tRNA ligase beta subunit (Thermococcus sibiricus (strain DSM 12597 / MM 739)).